Consider the following 118-residue polypeptide: MNRRELGQKWEELAEQYLRKKGYKILTRNYQIRGGEIDIVAQDGEFLVFIEVRFRSDISFGTPSETVNEKKKASLKKAIKVYIHENFLYHLQPRVDFIGIEQKDNRFFVNHYQNVLDF.

The protein belongs to the UPF0102 family.

The protein is UPF0102 protein CHY_1414 of Carboxydothermus hydrogenoformans (strain ATCC BAA-161 / DSM 6008 / Z-2901).